A 522-amino-acid polypeptide reads, in one-letter code: Glucans biosynthesis protein G (522 aa).

A signal peptide spans 1–33 (MLDNKFGFKQRVASLRWLSAAIMLSVSAVPAWA).

It belongs to the OpgD/OpgG family.

Its subcellular location is the periplasm. Its pathway is glycan metabolism; osmoregulated periplasmic glucan (OPG) biosynthesis. In terms of biological role, involved in the biosynthesis of osmoregulated periplasmic glucans (OPGs). The sequence is that of Glucans biosynthesis protein G from Pectobacterium atrosepticum (strain SCRI 1043 / ATCC BAA-672) (Erwinia carotovora subsp. atroseptica).